Consider the following 308-residue polypeptide: Methionyl-tRNA formyltransferase (308 aa).

110-113 (SLLP) contributes to the (6S)-5,6,7,8-tetrahydrofolate binding site.

The protein belongs to the Fmt family.

It catalyses the reaction L-methionyl-tRNA(fMet) + (6R)-10-formyltetrahydrofolate = N-formyl-L-methionyl-tRNA(fMet) + (6S)-5,6,7,8-tetrahydrofolate + H(+). In terms of biological role, attaches a formyl group to the free amino group of methionyl-tRNA(fMet). The formyl group appears to play a dual role in the initiator identity of N-formylmethionyl-tRNA by promoting its recognition by IF2 and preventing the misappropriation of this tRNA by the elongation apparatus. This chain is Methionyl-tRNA formyltransferase, found in Neisseria gonorrhoeae (strain NCCP11945).